The primary structure comprises 258 residues: Regulatory protein RecX (258 aa).

This sequence belongs to the RecX family.

The protein localises to the cytoplasm. Modulates RecA activity. The chain is Regulatory protein RecX from Streptococcus thermophilus (strain ATCC BAA-491 / LMD-9).